We begin with the raw amino-acid sequence, 253 residues long: Indole-3-glycerol phosphate synthase (253 aa).

It belongs to the TrpC family.

It catalyses the reaction 1-(2-carboxyphenylamino)-1-deoxy-D-ribulose 5-phosphate + H(+) = (1S,2R)-1-C-(indol-3-yl)glycerol 3-phosphate + CO2 + H2O. Its pathway is amino-acid biosynthesis; L-tryptophan biosynthesis; L-tryptophan from chorismate: step 4/5. The protein is Indole-3-glycerol phosphate synthase of Bacillus cereus (strain AH187).